The following is a 274-amino-acid chain: Acetyl-coenzyme A carboxylase carboxyl transferase subunit beta (274 aa).

A CoA carboxyltransferase N-terminal domain is found at 18–274 (IWTKCKKCDY…FYNRQCFLKF (257 aa)). Positions 22, 25, 41, and 44 each coordinate Zn(2+). A C4-type zinc finger spans residues 22–44 (CKKCDYILLQKDFEENLMVCPKC).

The protein belongs to the AccD/PCCB family. As to quaternary structure, acetyl-CoA carboxylase is a heterohexamer composed of biotin carboxyl carrier protein (AccB), biotin carboxylase (AccC) and two subunits each of ACCase subunit alpha (AccA) and ACCase subunit beta (AccD). Requires Zn(2+) as cofactor.

The protein localises to the cytoplasm. It catalyses the reaction N(6)-carboxybiotinyl-L-lysyl-[protein] + acetyl-CoA = N(6)-biotinyl-L-lysyl-[protein] + malonyl-CoA. It participates in lipid metabolism; malonyl-CoA biosynthesis; malonyl-CoA from acetyl-CoA: step 1/1. Functionally, component of the acetyl coenzyme A carboxylase (ACC) complex. Biotin carboxylase (BC) catalyzes the carboxylation of biotin on its carrier protein (BCCP) and then the CO(2) group is transferred by the transcarboxylase to acetyl-CoA to form malonyl-CoA. This Endomicrobium trichonymphae protein is Acetyl-coenzyme A carboxylase carboxyl transferase subunit beta.